The following is a 335-amino-acid chain: MGSRERRWLLKHFLNKECLWVKNSASTAVIKVYTSTTARSPLWPGRHAAMPGIEGPINVTVQLMKPKDRKMCATFYVNGVFVDSCTPTAFYCREVQRYGIYLLFFGDLVDPEPPNVIPENIAVHKNEPPVHLTILQMVNSATLLKTPDDLPKPHVEVVPLGPFGPWMANGSLLQYTINPDLLICCPSIGTLPTMSNIITWITKCENEECESCHGNSDHACVLRGVTLADQNYGSDTCPCVAPCSMRHGNIARITTSSNLLGFLFPPESQNDIVAIRAKSNKLTLNVQDIFCGVTREGEEVACLQSPWLLFGLSHLVSRMVMYGCESIKRKCLRSY.

The protein belongs to the herpesviridae cytoplasmic envelopment protein 2 family. As to quaternary structure, interacts with cytoplasmic envelopment protein 3 and with the capsid.

It is found in the virion tegument. It localises to the host cytoplasm. The protein localises to the host nucleus. Plays a critical role in cytoplasmic virus egress. Participates in the final step of tegumentation and envelope acquisition within the host cytoplasm by directly interacting with the capsid. Upon virion binding to target cell, a signaling cascade is triggered to disrupt the interaction with the capsid, thereby preparing capsid uncoating. The polypeptide is Cytoplasmic envelopment protein 2 (33) (Connochaetes taurinus (Blue wildebeest)).